The following is a 402-amino-acid chain: MSEARLFTSESVTEGHPDKICDAISDSVLDALLAGDPKSRVAVETLVTTGQVHVVGEVTTNAKEAFADITNTVRERILEIGYDHSDKGFDGETCGVNIGIGRQSPDIAQGVDTAHETRVGGAADPLDSQGAGDQGLMFGYAIADTPELMPLPIALAHRLSRKLTEVRKNGTLDYLRPDGKTQVTVQYDGTTPVRLDTVVLSTQHADGIELDSQLEPEIKQHVIDAVLTELGHQTLDTSNPRILVNPTGKFVLGGPMGDAGLTGRKIIVDTYGGWARHGGGAFSGKDPSKVDRSAAYAMRWVAKNVVAAGLAERVEVQVAYAIGKAAPVGLFVETFGSETVDPVKIEKAIGEVFDLRPGAIVRDLDLLRPIYAPTAAYGHFGRTDIELPWEQLNKVDDLKSAV.

Residue His-16 coordinates ATP. Residue Asp-18 coordinates Mg(2+). Glu-44 contributes to the K(+) binding site. Glu-57 and Gln-103 together coordinate L-methionine. The interval 103–113 is flexible loop; that stretch reads QSPDIAQGVDT. ATP is bound by residues 178-180, 249-250, Asp-258, 264-265, Ala-281, and Lys-285; these read DGK, KF, and RK. An L-methionine-binding site is contributed by Asp-258. Lys-289 contributes to the L-methionine binding site.

This sequence belongs to the AdoMet synthase family. As to quaternary structure, homotetramer; dimer of dimers. The cofactor is Mg(2+). It depends on K(+) as a cofactor.

It localises to the cytoplasm. The enzyme catalyses L-methionine + ATP + H2O = S-adenosyl-L-methionine + phosphate + diphosphate. It functions in the pathway amino-acid biosynthesis; S-adenosyl-L-methionine biosynthesis; S-adenosyl-L-methionine from L-methionine: step 1/1. In terms of biological role, catalyzes the formation of S-adenosylmethionine (AdoMet) from methionine and ATP. The overall synthetic reaction is composed of two sequential steps, AdoMet formation and the subsequent tripolyphosphate hydrolysis which occurs prior to release of AdoMet from the enzyme. This Mycolicibacterium gilvum (strain PYR-GCK) (Mycobacterium gilvum (strain PYR-GCK)) protein is S-adenosylmethionine synthase.